A 371-amino-acid polypeptide reads, in one-letter code: Protein STRICTOSIDINE SYNTHASE-LIKE 6 (371 aa).

Residues 1–21 (MPVFLSSRFLFFCIIVPLLIS) form the signal peptide. Residues Asn-101 and Asn-137 are each glycosylated (N-linked (GlcNAc...) asparagine). The residue at position 303 (Tyr-303) is a Phosphotyrosine.

Belongs to the strictosidine synthase family.

It localises to the vacuole. The polypeptide is Protein STRICTOSIDINE SYNTHASE-LIKE 6 (Arabidopsis thaliana (Mouse-ear cress)).